The following is a 194-amino-acid chain: Putative adenylate kinase (194 aa).

Residues Gly16, Gly18, Lys19, Thr20, and Thr21 each contribute to the ATP site. Residues 36–59 form an NMP region; the sequence is SVGELLAGTPYVTYIPELDTYEIV. The interval 108 to 118 is LID; that stretch reads RRGWPLKKILD. ATP is bound at residue Arg109.

It belongs to the adenylate kinase family. AK6 subfamily. As to quaternary structure, interacts with uS11. Not a structural component of 40S pre-ribosomes, but transiently interacts with them by binding to uS11.

The catalysed reaction is AMP + ATP = 2 ADP. The enzyme catalyses ATP + H2O = ADP + phosphate + H(+). Its function is as follows. Broad-specificity nucleoside monophosphate (NMP) kinase that catalyzes the reversible transfer of the terminal phosphate group between nucleoside triphosphates and monophosphates. Also has ATPase activity. Involved in the late maturation steps of the 30S ribosomal particles, specifically 16S rRNA maturation. While NMP activity is not required for ribosome maturation, ATPase activity is. Associates transiently with small ribosomal subunit protein uS11. ATP hydrolysis breaks the interaction with uS11. May temporarily remove uS11 from the ribosome to enable a conformational change of the ribosomal RNA that is needed for the final maturation step of the small ribosomal subunit. The sequence is that of Putative adenylate kinase from Pyrobaculum aerophilum (strain ATCC 51768 / DSM 7523 / JCM 9630 / CIP 104966 / NBRC 100827 / IM2).